Consider the following 342-residue polypeptide: MFTITQPDTQPSDHIQHKIDNKTKPLGALGQLEAVALQLALIQQTEKIEIRHPHLLVFAGDHGIAQHSLSIAPSEVTAQMVANFLAGGAAINCFCRTNDMALKVIDAGIKVEPEDHPNLIKQRLGHGTEDFSQYAAMTDNTVLQALEYGANVVEVLNQQSCNLVGFGEMGIGNTSSAAAIMAALLNIPADECVGRGTGIDDQQLQRKVDLITQALDLHAEQLSDPLSILASVGGFEIAQIVGGMLKAAENKMTVLVDGFISTAAAMLAVSMHPEANHYFIYCHCSDESGHQRMLQHLNATPLLSLGLRLGEGTGAALALPLLRSACCFYNEMASFEDAGVTV.

E311 acts as the Proton acceptor in catalysis.

The protein belongs to the CobT family.

The catalysed reaction is 5,6-dimethylbenzimidazole + nicotinate beta-D-ribonucleotide = alpha-ribazole 5'-phosphate + nicotinate + H(+). The protein operates within nucleoside biosynthesis; alpha-ribazole biosynthesis; alpha-ribazole from 5,6-dimethylbenzimidazole: step 1/2. Catalyzes the synthesis of alpha-ribazole-5'-phosphate from nicotinate mononucleotide (NAMN) and 5,6-dimethylbenzimidazole (DMB). The chain is Nicotinate-nucleotide--dimethylbenzimidazole phosphoribosyltransferase from Photobacterium profundum (strain SS9).